The sequence spans 529 residues: uncharacterized protein (529 aa).

Residues 1 to 20 (MGADLKQPQDADSPPKGVSR) are disordered. A signal peptide (tat-type signal) is located at residues 1-52 (MGADLKQPQDADSPPKGVSRRRFLTTGAAAVVGTGVGAGGTALLSSHPRGPA).

Predicted to be exported by the Tat system. The position of the signal peptide cleavage has not been experimentally proven.

This is an uncharacterized protein from Mycobacterium tuberculosis (strain CDC 1551 / Oshkosh).